The sequence spans 297 residues: HTH-type transcriptional regulator ArgP (297 aa).

One can recognise an HTH lysR-type domain in the interval 2 to 58 (FDYKLLSALAAVVEQAGFERAAQVLGLSQSAISQRIKLLEARVGQPVLVRGTPPSPT). The segment at residues 19-38 (FERAAQVLGLSQSAISQRIK) is a DNA-binding region (H-T-H motif).

This sequence belongs to the LysR transcriptional regulatory family. Homodimer.

Its function is as follows. Controls the transcription of genes involved in arginine and lysine metabolism. The sequence is that of HTH-type transcriptional regulator ArgP from Pseudomonas fluorescens (strain Pf0-1).